A 103-amino-acid chain; its full sequence is uncharacterized protein (103 aa).

This is an uncharacterized protein from Microplitis demolitor (Parasitoid wasp).